Consider the following 132-residue polypeptide: Small ribosomal subunit protein uS8 (132 aa).

Belongs to the universal ribosomal protein uS8 family. Part of the 30S ribosomal subunit. Contacts proteins S5 and S12.

Its function is as follows. One of the primary rRNA binding proteins, it binds directly to 16S rRNA central domain where it helps coordinate assembly of the platform of the 30S subunit. This chain is Small ribosomal subunit protein uS8, found in Corynebacterium glutamicum (strain R).